We begin with the raw amino-acid sequence, 443 residues long: Anthocyanidin 3-O-glucoside 5-O-glucosyltransferase 2 (443 aa).

The signal sequence occupies residues 1-22; it reads MVRRRVLLATFPAQGHINPALQ. Residue His16 is the Proton acceptor of the active site. His16 lines the an anthocyanidin pocket. UDP-alpha-D-glucose is bound by residues Gln340, His355, Trp358, Asn359, Ser360, Glu363, Asp379, and Gln380.

Belongs to the UDP-glycosyltransferase family.

It catalyses the reaction an anthocyanidin 3-O-beta-D-glucoside + UDP-alpha-D-glucose = an anthocyanidin 3,5-di-O-beta-D-glucoside + UDP + 2 H(+). It participates in pigment biosynthesis; anthocyanin biosynthesis. In terms of biological role, catalyzes the glucosylation at the O-5 position of anthocyanidin 3-glucosides to form anthocyanidin 3,5-di-O-glucosides using UDP-glucose as sugar donor. Anthocyanidin 3,5-di-O-glucosides are molecules that are responsible for pigmentation. Also acts on anthocyanidin 3-O-(6-O-malonylglucoside). Much less active with hydroxycinnamoylglucose derivatives. No activity in the absence of the 3-O-glucoside group. The sequence is that of Anthocyanidin 3-O-glucoside 5-O-glucosyltransferase 2 (PF3R6) from Perilla frutescens (Beefsteak mint).